The primary structure comprises 162 residues: Sorting nexin-3 (162 aa).

Ala2 carries the post-translational modification N-acetylalanine. Residues Asn27 to Asp151 form the PX domain. At Arg43 the chain carries Omega-N-methylarginine. 4 residues coordinate a 1,2-diacyl-sn-glycero-3-phospho-(1D-myo-inositol-3-phosphate): Arg70, Ser72, Lys95, and Arg118. The residue at position 72 (Ser72) is a Phosphoserine. A Glycyl lysine isopeptide (Lys-Gly) (interchain with G-Cter in SUMO2) cross-link involves residue Lys95. The interval Asp147 to Ala162 is binds predominantly to PtdIns(P5) and weaker to PtdIns(P3) abd PtdIns(P4); involved in neurite outgrowth regulation.

Belongs to the sorting nexin family. In terms of assembly, interacts with VPS26A, VPS29. Interacts with VPS35; the interaction with VPS35 is direct. The association with the retromer CSC subcomplex subunits is proposed to represent a functional distinct retromer variant described as SNX3-retromer complex. Interacts with USP10 and SCNN1A. Interacts with TRFC. Interacts with SNX8; 2 molecules of SNX8 seems to associate with one molecule of SNX3. Interacts with PTPRU. Interacts with MON2 and DOP1B. Ubiquitinated, leading to its proteasomal degradation. Deubiquitinated by USP10. In terms of tissue distribution, highly expressed in developing red cells and hematopoietic tissues.

It is found in the early endosome. The protein localises to the cytoplasmic vesicle. The protein resides in the phagosome. In terms of biological role, phosphoinositide-binding protein required for multivesicular body formation. Specifically binds phosphatidylinositol 3-phosphate (PtdIns(P3)). Can also bind phosphatidylinositol 4-phosphate (PtdIns(P4)), phosphatidylinositol 5-phosphate (PtdIns(P5)) and phosphatidylinositol 3,5-biphosphate (PtdIns(3,5)P2). Plays a role in protein transport between cellular compartments. Together with RAB7A facilitates endosome membrane association of the retromer cargo-selective subcomplex (CSC). May act in part as component of the SNX3-retromer complex which mediates the retrograde endosome-to-TGN transport of WLS distinct from the SNX-BAR retromer pathway. Promotes stability and cell surface expression of epithelial sodium channel (ENAC) subunits SCNN1A and SCNN1G. Not involved in EGFR degradation. Involved in the regulation of phagocytosis in dendritic cells possibly by regulating EEA1 recruitment to the nascent phagosomes. Involved in iron homeostasis through regulation of endocytic recycling of the transferrin receptor Tfrc presuambly by delivering the transferrin:transferrin receptor complex to recycling endosomes; the function may involve the CSC retromer subcomplex. Involved in regulation of neurite outgrowth in primary neurons. The protein is Sorting nexin-3 (Snx3) of Mus musculus (Mouse).